The sequence spans 410 residues: Peptidase T (410 aa).

Residue histidine 78 coordinates Zn(2+). Aspartate 80 is a catalytic residue. Zn(2+) is bound at residue aspartate 140. Glutamate 174 functions as the Proton acceptor in the catalytic mechanism. Zn(2+) is bound by residues glutamate 175, aspartate 197, and histidine 379.

The protein belongs to the peptidase M20B family. It depends on Zn(2+) as a cofactor.

It localises to the cytoplasm. It carries out the reaction Release of the N-terminal residue from a tripeptide.. In terms of biological role, cleaves the N-terminal amino acid of tripeptides. The protein is Peptidase T of Staphylococcus saprophyticus subsp. saprophyticus (strain ATCC 15305 / DSM 20229 / NCIMB 8711 / NCTC 7292 / S-41).